Here is a 158-residue protein sequence, read N- to C-terminus: Putative tyrosine-protein phosphatase OCA1 (158 aa).

The region spanning 7–158 is the Tyrosine-protein phosphatase domain; the sequence is NYGMVEENFY…DEELVFGASY (152 aa). Residue Cys99 is the Phosphocysteine intermediate of the active site.

Belongs to the protein-tyrosine phosphatase family.

The protein localises to the cytoplasm. It catalyses the reaction O-phospho-L-tyrosyl-[protein] + H2O = L-tyrosyl-[protein] + phosphate. Its function is as follows. Putative tyrosine-protein phosphatase required for protection against superoxide stress. The polypeptide is Putative tyrosine-protein phosphatase OCA1 (OCA1) (Mycosarcoma maydis (Corn smut fungus)).